The following is a 1218-amino-acid chain: DNA polymerase subunit gamma-1 (1218 aa).

The segment at 31-50 is disordered; it reads LDPVPSDGRPPSQMPSSENG. The short motif at 179-183 is the Exo I element; the sequence is VFDVE. Residue D181 is the Exonuclease activity of the active site. The Exo II motif lies at 250-258; the sequence is VGHNVSFDR. S289 is a binding site for DNA. The short motif at 378 to 386 is the Exo III element; the sequence is YCARDVWAT. Residues 484-524 are disordered; sequence KKVKKPASASKLPIEGAGPFGDPMDQEDPGPPSEEEELQRS. The segment at 492–553 is accessory-interacting determinant; sequence ASKLPIEGAG…RPQHLPGHPG (62 aa). The segment covering 507-520 has biased composition (acidic residues); it reads MDQEDPGPPSEEEE. R561 contributes to the RNA binding site. S575 contacts DNA. Positions 733, 742, and 747 each coordinate RNA. DNA is bound by residues K785 and T828. Residues 837 to 843 are trigger loop; sequence TWLTASN. RNA-binding residues include S842 and R848. A Pol A motif is present at residues 866 to 875; the sequence is VGADVDSQEL. A 2'-deoxyribonucleoside 5'-triphosphate is bound by residues D869, V870, S872, E874, R922, K926, and Y930. Residues D869 and V870 each contribute to the Mg(2+) site. The Pol B signature appears at 922–937; the sequence is REHAKIFNYGRIYGAG. DNA-binding residues include T1073 and S1074. The short motif at 1113-1120 is the Pol C element; sequence HDEVRYLV. D1114 provides a ligand contact to a 2'-deoxyribonucleoside 5'-triphosphate. Position 1114 (D1114) interacts with Mg(2+).

This sequence belongs to the DNA polymerase type-A family. As to quaternary structure, heterotrimer composed of a catalytic subunit and a homodimer of accessory subunits (POLG:POLG2). Interacts with TTC3. Interacts with LIG3. Mg(2+) serves as cofactor.

It is found in the mitochondrion. The protein resides in the mitochondrion matrix. Its subcellular location is the mitochondrion nucleoid. It carries out the reaction DNA(n) + a 2'-deoxyribonucleoside 5'-triphosphate = DNA(n+1) + diphosphate. The enzyme catalyses a 3'-end 2'-deoxyribonucleotidyl-deoxyribonucleotide-DNA + H2O = a 3'-end 2'-deoxyribonucleotide-DNA + a 2'-deoxyribonucleoside 5'-phosphate + H(+). It catalyses the reaction a 5'-end 2'-deoxyribose-2'-deoxyribonucleotide-DNA = (2E,4S)-4-hydroxypenten-2-al-5-phosphate + a 5'-end 5'-phospho-2'-deoxyribonucleoside-DNA + H(+). With respect to regulation, inhibited by dideoxynucleotides such as antiviral agent zalcitabine. In terms of biological role, catalytic subunit of DNA polymerase gamma solely responsible for replication of mitochondrial DNA (mtDNA). Replicates both heavy and light strands of the circular mtDNA genome using a single-stranded DNA template, RNA primers and the four deoxyribonucleoside triphosphates as substrates. Has 5' -&gt; 3' polymerase activity. Functionally interacts with TWNK and SSBP1 at the replication fork to form a highly processive replisome, where TWNK unwinds the double-stranded DNA template prior to replication and SSBP1 covers the parental heavy strand to enable continuous replication of the entire mitochondrial genome. A single nucleotide incorporation cycle includes binding of the incoming nucleotide at the insertion site, a phosphodiester bond formation reaction that extends the 3'-end of the primer DNA, and translocation of the primer terminus to the post-insertion site. After completing replication of a mtDNA strand, mediates 3' -&gt; 5' exonucleolytic degradation at the nick to enable proper ligation. Highly accurate due to high nucleotide selectivity and 3' -&gt; 5' exonucleolytic proofreading. Proficiently corrects base substitutions, single-base additions and deletions in non-repetitive sequences and short repeats, but displays lower proofreading activity when replicating longer homopolymeric stretches. Exerts exonuclease activity toward single-stranded DNA and double-stranded DNA containing 3'-terminal mispairs. When a misincorporation occurs, transitions from replication to a pro-nucleolytic editing mode and removes the missincorporated nucleoside in the exonuclease active site. Proceeds via an SN2 nucleolytic mechanism in which Asp-198 catalyzes phosphodiester bond hydrolysis and Glu-200 stabilizes the leaving group. As a result the primer strand becomes one nucleotide shorter and is positioned in the post-insertion site, ready to resume DNA synthesis. Exerts 5'-deoxyribose phosphate (dRP) lyase activity and mediates repair-associated mtDNA synthesis (gap filling) in base-excision repair pathway. Catalyzes the release of the 5'-terminal 2-deoxyribose-5-phosphate sugar moiety from incised apurinic/apyrimidinic (AP) sites to produce a substrate for DNA ligase. The dRP lyase reaction does not require divalent metal ions and likely proceeds via a Schiff base intermediate in a beta-elimination reaction mechanism. The protein is DNA polymerase subunit gamma-1 of Mus musculus (Mouse).